The chain runs to 178 residues: Probable DNA-directed RNA polymerase subunit delta (178 aa).

Positions 14 to 81 (LSMIEVAHAI…GENTWGLRTW (68 aa)) constitute an HTH HARE-type domain. Over residues 120 to 143 (DDDVIDYDSDDPEDEEVEAEDTTS) the composition is skewed to acidic residues. Positions 120-178 (DDDVIDYDSDDPEDEEVEAEDTTSDDAPAFEDLSNDDDTDVLPDGIEGQLSELNEDDEN) are disordered.

It belongs to the RpoE family. In terms of assembly, RNAP is composed of a core of 2 alpha, a beta and a beta' subunits. The core is associated with a delta subunit and one of several sigma factors.

Its function is as follows. Participates in both the initiation and recycling phases of transcription. In the presence of the delta subunit, RNAP displays an increased specificity of transcription, a decreased affinity for nucleic acids, and an increased efficiency of RNA synthesis because of enhanced recycling. This is Probable DNA-directed RNA polymerase subunit delta from Pediococcus pentosaceus (strain ATCC 25745 / CCUG 21536 / LMG 10740 / 183-1w).